Reading from the N-terminus, the 89-residue chain is Large ribosomal subunit protein bL27 (89 aa).

The tract at residues 1–26 (MATKKAGGSSKNGRDSAGRRLGLKKT) is disordered.

This sequence belongs to the bacterial ribosomal protein bL27 family.

The sequence is that of Large ribosomal subunit protein bL27 from Orientia tsutsugamushi (strain Boryong) (Rickettsia tsutsugamushi).